The sequence spans 86 residues: Large ribosomal subunit protein bL27 (86 aa).

The segment at Met-1–Val-31 is disordered.

The protein belongs to the bacterial ribosomal protein bL27 family.

In Desulfotalea psychrophila (strain LSv54 / DSM 12343), this protein is Large ribosomal subunit protein bL27.